The sequence spans 57 residues: Small ribosomal subunit protein bS21 (57 aa).

A disordered region spans residues 35 to 57; that stretch reads REHYEKPSVKRKKKAEAARKKKF. Residues 43 to 57 show a composition bias toward basic residues; the sequence is VKRKKKAEAARKKKF.

Belongs to the bacterial ribosomal protein bS21 family.

In Alkaliphilus metalliredigens (strain QYMF), this protein is Small ribosomal subunit protein bS21.